A 740-amino-acid polypeptide reads, in one-letter code: Death domain-associated protein 6 (740 aa).

A disordered region spans residues 1–55; sequence MATANSIIVLDDDDEDEAAAQPGPSHPLPNAASPGAEAPSSSEPHGARGSSSSGG. The segment at 1-160 is necessary for interaction with USP7 and ATRX; it reads MATANSIIVL…TSNEPSGNNP (160 aa). A Phosphoserine modification is found at serine 25. Low complexity predominate over residues 29–55; that stretch reads PNAASPGAEAPSSSEPHGARGSSSSGG. Lysine 142 is covalently cross-linked (Glycyl lysine isopeptide (Lys-Gly) (interchain with G-Cter in SUMO2)). A disordered region spans residues 147-185; sequence PAATTSNEPSGNNPPTHLSLDPTNAENTASQSPRTRGSR. The span at 149–181 shows a compositional bias: polar residues; the sequence is ATTSNEPSGNNPPTHLSLDPTNAENTASQSPRT. A phosphoserine mark is found at serine 178 and serine 213. Coiled-coil stretches lie at residues 180 to 217 and 358 to 399; these read RTRG…ELDD and ARRL…ARLQ. The segment at 183–417 is interaction with histone H3.3; sequence GSRRQIQRLE…TPEASLDSGE (235 aa). The segment at 347–570 is necessary for interaction with USP7; the sequence is GVDPALSDPV…SPVSQLFELE (224 aa). The segment at 384–724 is disordered; the sequence is DKSEEGERKK…PRPGTCKTSV (341 aa). The short motif at 391–395 is the Nuclear localization signal element; sequence RKKRR. Phosphoserine is present on residues serine 412 and serine 424. The stretch at 430–489 forms a coiled coil; it reads ASRAETDDEDDEESDEEEEEEEEEEEEEATDSEEEEDLEQMQEGQEDDEEEDEEEEAAAG. Residues 435-486 are compositionally biased toward acidic residues; it reads TDDEDDEESDEEEEEEEEEEEEEATDSEEEEDLEQMQEGQEDDEEEDEEEEA. Position 459 is a phosphothreonine (threonine 459). A phosphoserine mark is found at serine 495 and serine 498. Polar residues predominate over residues 496–505; the sequence is PMSSLQISNE. Residues 501 to 625 form an interaction with MAP3K5 region; that stretch reads QISNEKNLEP…GVSPHNWGDS (125 aa). At lysine 512 the chain carries N6-acetyllysine. Residues 514-524 are compositionally biased toward polar residues; the sequence is ISRSSGEQQNK. A compositionally biased stretch (low complexity) spans 529-542; it reads SPSLLSEEPLAPSS. A compositionally biased stretch (acidic residues) spans 551–561; that stretch reads QPEELTLEEES. Residues serine 561 and serine 580 each carry the phosphoserine modification. Residues 578–590 show a composition bias toward polar residues; the sequence is TPSSVETDISSSR. An interaction with SPOP region spans residues 626 to 740; sequence GPPCKKSRKE…EEIIVLSDSD (115 aa). 2 (Microbial infection) Interaction with Puumala hantavirus nucleoprotein regions span residues 627–634 and 658–663; these read PPCKKSRK and KNGKKI. Residues 628–634 carry the Nuclear localization signal motif; sequence PCKKSRK. Glycyl lysine isopeptide (Lys-Gly) (interchain with G-Cter in SUMO1) cross-links involve residues lysine 630 and lysine 631. Positions 650–660 are enriched in basic and acidic residues; that stretch reads ERQRSVHEKNG. Residues serine 668 and serine 671 each carry the phosphoserine modification. The segment covering 673–683 has biased composition (low complexity); sequence LASLAPVADSS. Phosphoserine is present on residues serine 688, serine 702, serine 737, and serine 739. The segment covering 693–711 has biased composition (polar residues); sequence LVTSSLCIPSPARLSQTPH. Positions 733–740 are sumo interaction motif (SIM); it reads IIVLSDSD.

It belongs to the DAXX family. As to quaternary structure, homomultimer. Interacts (via C-terminus) with TNFRSF6 (via death domain). Interacts with PAX5, SLC2A4/GLUT4, MAP3K5, TGFBR2, phosphorylated dimeric HSPB1/HSP27, CENPC, ETS1, sumoylated PML, UBE2I, MCRS1 and TP53. Interacts (via N-terminus) with HIPK2 and HIPK3. Interacts with HIPK1, which induces translocation from PML/POD/ND10 nuclear bodies to chromatin and enhances association with HDAC1. Interacts (non-phosphorylated) with PAX3, PAX7, DEK, HDAC1, HDAC2, HDAC3, acetylated histone H4 and histones H2A, H2B, H3, H3.3 and H4. Interacts with SPOP; mediating CUL3-dependent proteasomal degradation. Interacts with CBP; the interaction is dependent the sumoylation of CBP and suppresses CBP transcriptional activity via recruitment of HDAC2 directly in the complex with TP53 and HIPK2. Interacts with AXIN1; the interaction stimulates the interaction of DAXX with TP53, stimulates 'Ser-46' phosphorylation of TP53 on and induces cell death on UV irradiation. Interacts with MDM2; the interaction is direct. Interacts with USP7; the interaction is direct and independent of MDM2 and TP53. Part of a complex with DAXX, MDM2 and USP7 under non-stress conditions. Interacts (via N-terminus) with RASSF1 (via C-terminus); the interaction is independent of MDM2 and TP53; RASSF1 isoform A disrupts interactions among MDM2, DAXX and USP7, thus contributing to the efficient activation of TP53 by promoting MDM2 self-ubiquitination in cell-cycle checkpoint control in response to DNA damage. Interacts with ATRX to form the chromatin remodeling complex ATRX:DAXX. Interacts with HSF1 (via homotrimeric form preferentially); this interaction relieves homotrimeric HSF1 from repression of its transcriptional activity by HSP90-dependent multichaperone complex upon heat shock. Interacts with SUMO1P1/SUMO5. In terms of assembly, (Microbial infection) Interacts with human cytomegalovirus/HHV-5 tegument phosphoprotein pp71 and protein UL123. (Microbial infection) Interacts with Epstein-Barr virus protein BNRF1. As to quaternary structure, (Microbial infection) Interacts with human adenovirus 5 E1B-55K protein; this interaction might alterate the normal interactions of DAXX, PML, and TP53, which may contribute to cell transformation. In terms of assembly, (Microbial infection) Interacts with Puumala hantavirus nucleoprotein. In terms of processing, sumoylated with SUMO1 on multiple lysine residues. Post-translationally, phosphorylated by HIPK1 upon glucose deprivation. Polyubiquitinated; which is promoted by CUL3 and SPOP and results in proteasomal degradation. Ubiquitinated by MDM2; inducing its degradation. Deubiquitinated by USP7; leading to stabilize it. As to expression, ubiquitous.

The protein localises to the cytoplasm. It is found in the nucleus. The protein resides in the nucleoplasm. Its subcellular location is the PML body. It localises to the nucleolus. The protein localises to the chromosome. It is found in the centromere. Transcription corepressor known to repress transcriptional potential of several sumoylated transcription factors. Down-regulates basal and activated transcription. Its transcription repressor activity is modulated by recruiting it to subnuclear compartments like the nucleolus or PML/POD/ND10 nuclear bodies through interactions with MCSR1 and PML, respectively. Seems to regulate transcription in PML/POD/ND10 nuclear bodies together with PML and may influence TNFRSF6-dependent apoptosis thereby. Inhibits transcriptional activation of PAX3 and ETS1 through direct protein-protein interactions. Modulates PAX5 activity; the function seems to involve CREBBP. Acts as an adapter protein in a MDM2-DAXX-USP7 complex by regulating the RING-finger E3 ligase MDM2 ubiquitination activity. Under non-stress condition, in association with the deubiquitinating USP7, prevents MDM2 self-ubiquitination and enhances the intrinsic E3 ligase activity of MDM2 towards TP53, thereby promoting TP53 ubiquitination and subsequent proteasomal degradation. Upon DNA damage, its association with MDM2 and USP7 is disrupted, resulting in increased MDM2 autoubiquitination and consequently, MDM2 degradation, which leads to TP53 stabilization. Acts as a histone chaperone that facilitates deposition of histone H3.3. Acts as a targeting component of the chromatin remodeling complex ATRX:DAXX which has ATP-dependent DNA translocase activity and catalyzes the replication-independent deposition of histone H3.3 in pericentric DNA repeats outside S-phase and telomeres, and the in vitro remodeling of H3.3-containing nucleosomes. Does not affect the ATPase activity of ATRX but alleviates its transcription repression activity. Upon neuronal activation associates with regulatory elements of selected immediate early genes where it promotes deposition of histone H3.3 which may be linked to transcriptional induction of these genes. Required for the recruitment of histone H3.3:H4 dimers to PML-nuclear bodies (PML-NBs); the process is independent of ATRX and facilitated by ASF1A; PML-NBs are suggested to function as regulatory sites for the incorporation of newly synthesized histone H3.3 into chromatin. In case of overexpression of centromeric histone variant CENPA (as found in various tumors) is involved in its mislocalization to chromosomes; the ectopic localization involves a heterotypic tetramer containing CENPA, and histones H3.3 and H4 and decreases binding of CTCF to chromatin. Proposed to mediate activation of the JNK pathway and apoptosis via MAP3K5 in response to signaling from TNFRSF6 and TGFBR2. Interaction with HSPB1/HSP27 may prevent interaction with TNFRSF6 and MAP3K5 and block DAXX-mediated apoptosis. In contrast, in lymphoid cells JNC activation and TNFRSF6-mediated apoptosis may not involve DAXX. Shows restriction activity towards human cytomegalovirus (HCMV). Plays a role as a positive regulator of the heat shock transcription factor HSF1 activity during the stress protein response. The sequence is that of Death domain-associated protein 6 (DAXX) from Homo sapiens (Human).